The chain runs to 692 residues: Protein arginine N-methyltransferase 7 (692 aa).

2 consecutive SAM-dependent MTase PRMT-type domains span residues 14–359 and 368–692; these read ENSW…YSLW and AKTV…QEKR.

The protein belongs to the class I-like SAM-binding methyltransferase superfamily. Protein arginine N-methyltransferase family. PRMT7 subfamily.

Essential arginine methyltransferase that can both catalyze the formation of omega-N monomethylarginine (MMA) and symmetrical dimethylarginine (sDMA). Specifically mediates the symmetrical dimethylation of arginine residues in the small nuclear ribonucleoproteins SmD1 and SmD3. In Drosophila persimilis (Fruit fly), this protein is Protein arginine N-methyltransferase 7 (Art7).